The chain runs to 219 residues: Putative protease Do-like 6, chloroplastic (219 aa).

A chloroplast-targeting transit peptide spans 1 to 45 (MLFRSVHHIVARFSNSTSTPIHRFFYSPSLLRRRSSFNASLISRC). The serine protease stretch occupies residues 61-216 (KIFSFSREPN…YSGQINKKIY (156 aa)). Active-site charge relay system residues include His99, Asp130, and Ser208.

Belongs to the peptidase S1B family.

It is found in the plastid. Its subcellular location is the chloroplast. Putative serine protease. The protein is Putative protease Do-like 6, chloroplastic (DEGP6) of Arabidopsis thaliana (Mouse-ear cress).